The chain runs to 630 residues: Chaperone protein DnaK (630 aa).

Thr-197 is modified (phosphothreonine; by autocatalysis). The span at 604–618 (KNNESVKNNESVKNN) shows a compositional bias: polar residues. The disordered stretch occupies residues 604–630 (KNNESVKNNESVKNNESVKDVDFEEIK). Basic and acidic residues predominate over residues 619–630 (ESVKDVDFEEIK).

This sequence belongs to the heat shock protein 70 family.

In terms of biological role, acts as a chaperone. This Karelsulcia muelleri (strain GWSS) (Sulcia muelleri) protein is Chaperone protein DnaK.